Consider the following 340-residue polypeptide: Phosphoribosylformylglycinamidine cyclo-ligase (340 aa).

Belongs to the AIR synthase family.

It is found in the cytoplasm. It catalyses the reaction 2-formamido-N(1)-(5-O-phospho-beta-D-ribosyl)acetamidine + ATP = 5-amino-1-(5-phospho-beta-D-ribosyl)imidazole + ADP + phosphate + H(+). Its pathway is purine metabolism; IMP biosynthesis via de novo pathway; 5-amino-1-(5-phospho-D-ribosyl)imidazole from N(2)-formyl-N(1)-(5-phospho-D-ribosyl)glycinamide: step 2/2. In Streptococcus mutans serotype c (strain ATCC 700610 / UA159), this protein is Phosphoribosylformylglycinamidine cyclo-ligase.